An 86-amino-acid chain; its full sequence is Large ribosomal subunit protein uL23 (86 aa).

It belongs to the universal ribosomal protein uL23 family. In terms of assembly, part of the 50S ribosomal subunit. Contacts protein L29.

Functionally, binds to 23S rRNA. One of the proteins that surrounds the polypeptide exit tunnel on the outside of the ribosome. The polypeptide is Large ribosomal subunit protein uL23 (Methanococcus maripaludis (strain DSM 14266 / JCM 13030 / NBRC 101832 / S2 / LL)).